The following is a 182-amino-acid chain: Epididymal-specific lipocalin-10 (182 aa).

Positions 1–19 (MKLEMALSIALALAVVSWT) are cleaved as a signal peptide. Asparagine 31 and asparagine 144 each carry an N-linked (GlcNAc...) asparagine glycan. Cysteine 85 and cysteine 176 form a disulfide bridge. An N6-acetyllysine modification is found at lysine 165.

Belongs to the calycin superfamily. Lipocalin family. Expressed in epididymis.

Its subcellular location is the secreted. In terms of biological role, may play a role in male fertility. May act as a retinoid carrier protein within the epididymis. This is Epididymal-specific lipocalin-10 (Lcn10) from Mus musculus (Mouse).